The sequence spans 386 residues: Patatin group M-3 (386 aa).

The first 23 residues, 1–23 (MATTKSFLILFFMILATTSSTCA), serve as a signal peptide directing secretion. A PNPLA domain is found at 32 to 229 (LSIDGGGIKG…TVGDPALLSL (198 aa)). Positions 36–41 (GGGIKG) match the GXGXXG motif. The GXSXG motif lies at 75-79 (GTSTG). The active-site Nucleophile is S77. The N-linked (GlcNAc...) asparagine glycan is linked to N115. D215 (proton acceptor) is an active-site residue. A DGA/G motif is present at residues 215-217 (DGG). A coiled-coil region spans residues 321 to 384 (ENALTGTTTE…DRKKLRANKA (64 aa)).

The protein belongs to the patatin family. Tuber.

The protein localises to the vacuole. Functionally, probable lipolytic acyl hydrolase (LAH), an activity which is thought to be involved in the response of tubers to pathogens. The sequence is that of Patatin group M-3 from Solanum tuberosum (Potato).